Reading from the N-terminus, the 226-residue chain is MKAIKIAIDGPASSGKSTVAKIIAKNLGYTYLDTGAMYRSATYIALTHGYTGKEVALILEELEKNPISFKKAKDGSQLVFLGDEDVTLAIRQNDVTNNVSWVSALPEIREELVHQQRRIAQAGGIIMDGRDIGTVVLPDAELKIFLVASVEERAERRYKENLEKGIESDFETLKEEIAARDYKDSHRKVSPLKSAEDALIFDTTGVSIDGVVQFIQEKAEKIVDMS.

Residue Gly10–Thr18 coordinates ATP.

Belongs to the cytidylate kinase family. Type 1 subfamily.

The protein resides in the cytoplasm. It carries out the reaction CMP + ATP = CDP + ADP. It catalyses the reaction dCMP + ATP = dCDP + ADP. The chain is Cytidylate kinase from Streptococcus pyogenes serotype M4 (strain MGAS10750).